We begin with the raw amino-acid sequence, 462 residues long: Chromosomal replication initiator protein DnaA (462 aa).

The interval Met-1–Ala-84 is domain I, interacts with DnaA modulators. Residues Ala-84 to Ser-125 are domain II. The interval Asn-126–Ala-342 is domain III, AAA+ region. ATP-binding residues include Gly-170, Gly-172, Lys-173, and Thr-174. The segment at Asn-343–Ser-462 is domain IV, binds dsDNA.

This sequence belongs to the DnaA family. In terms of assembly, oligomerizes as a right-handed, spiral filament on DNA at oriC.

It localises to the cytoplasm. Functionally, plays an essential role in the initiation and regulation of chromosomal replication. ATP-DnaA binds to the origin of replication (oriC) to initiate formation of the DNA replication initiation complex once per cell cycle. Binds the DnaA box (a 9 base pair repeat at the origin) and separates the double-stranded (ds)DNA. Forms a right-handed helical filament on oriC DNA; dsDNA binds to the exterior of the filament while single-stranded (ss)DNA is stabiized in the filament's interior. The ATP-DnaA-oriC complex binds and stabilizes one strand of the AT-rich DNA unwinding element (DUE), permitting loading of DNA polymerase. After initiation quickly degrades to an ADP-DnaA complex that is not apt for DNA replication. Binds acidic phospholipids. The chain is Chromosomal replication initiator protein DnaA from Shewanella baltica (strain OS195).